We begin with the raw amino-acid sequence, 303 residues long: Vesicle-trafficking protein SEC22c (303 aa).

At 1 to 183 (MSLILFACVV…EPAPSFRMEP (183 aa)) the chain is on the cytoplasmic side. Residues 8-119 (CVVRVRDGLP…YAFLEFDNVI (112 aa)) enclose the Longin domain. The chain crosses the membrane as a helical span at residues 184–204 (VTALGILSLILNIMCAALNLI). Residues 205–223 (RGIHLAEHSLQVAHEEIGN) lie on the Lumenal side of the membrane. A helical membrane pass occupies residues 224-244 (ILAFLIPFVACIFQCYLYLFY). Over 245–248 (SPAR) the chain is Cytoplasmic. Residues 249-269 (TMKVVLMLLFICLGNVYLHGL) form a helical membrane-spanning segment. Position 270 (R270) is a topological domain, lumenal. The chain crosses the membrane as a helical span at residues 271–291 (NLWQILFHIGVAFLSSHQILT). The Cytoplasmic portion of the chain corresponds to 292–303 (RQLQDKQSDCGV).

The protein belongs to the synaptobrevin family.

It is found in the endoplasmic reticulum membrane. May be involved in vesicle transport between the ER and the Golgi complex. This Bos taurus (Bovine) protein is Vesicle-trafficking protein SEC22c (SEC22C).